The primary structure comprises 202 residues: Ribosomal RNA small subunit methyltransferase G (202 aa).

S-adenosyl-L-methionine contacts are provided by residues Gly-75, Phe-80, 125–126, and Arg-139; that span reads VQ.

The protein belongs to the methyltransferase superfamily. RNA methyltransferase RsmG family.

It is found in the cytoplasm. In terms of biological role, specifically methylates the N7 position of a guanine in 16S rRNA. The polypeptide is Ribosomal RNA small subunit methyltransferase G (Mesomycoplasma hyopneumoniae (strain J / ATCC 25934 / NCTC 10110) (Mycoplasma hyopneumoniae)).